Reading from the N-terminus, the 376-residue chain is Riboflavin biosynthesis protein RibD (376 aa).

The tract at residues Met1–Lys157 is deaminase. One can recognise a CMP/dCMP-type deaminase domain in the interval Met13–Val135. His62 is a binding site for Zn(2+). Glu64 (proton donor) is an active-site residue. Zn(2+) contacts are provided by Cys87 and Cys96. The segment at Arg158–Leu376 is reductase. Ala166 serves as a coordination point for NADP(+). Ser180 is a substrate binding site. Trp182 lines the NADP(+) pocket. Residue Arg196 coordinates substrate. Thr208 and Asp212 together coordinate NADP(+). Leu216 and Arg219 together coordinate substrate. Ser233 contributes to the NADP(+) binding site. Glu304 contributes to the substrate binding site. An NADP(+)-binding site is contributed by Gly306–Ser312.

In the N-terminal section; belongs to the cytidine and deoxycytidylate deaminase family. It in the C-terminal section; belongs to the HTP reductase family. It depends on Zn(2+) as a cofactor.

The catalysed reaction is 2,5-diamino-6-hydroxy-4-(5-phosphoribosylamino)-pyrimidine + H2O + H(+) = 5-amino-6-(5-phospho-D-ribosylamino)uracil + NH4(+). The enzyme catalyses 5-amino-6-(5-phospho-D-ribitylamino)uracil + NADP(+) = 5-amino-6-(5-phospho-D-ribosylamino)uracil + NADPH + H(+). Its pathway is cofactor biosynthesis; riboflavin biosynthesis; 5-amino-6-(D-ribitylamino)uracil from GTP: step 2/4. It functions in the pathway cofactor biosynthesis; riboflavin biosynthesis; 5-amino-6-(D-ribitylamino)uracil from GTP: step 3/4. In terms of biological role, converts 2,5-diamino-6-(ribosylamino)-4(3h)-pyrimidinone 5'-phosphate into 5-amino-6-(ribosylamino)-2,4(1h,3h)-pyrimidinedione 5'-phosphate. This chain is Riboflavin biosynthesis protein RibD (ribD), found in Actinobacillus pleuropneumoniae (Haemophilus pleuropneumoniae).